A 471-amino-acid chain; its full sequence is 3-isopropylmalate dehydratase large subunit (471 aa).

The [4Fe-4S] cluster site is built by Cys-349, Cys-409, and Cys-412.

The protein belongs to the aconitase/IPM isomerase family. LeuC type 1 subfamily. As to quaternary structure, heterodimer of LeuC and LeuD. It depends on [4Fe-4S] cluster as a cofactor.

It catalyses the reaction (2R,3S)-3-isopropylmalate = (2S)-2-isopropylmalate. Its pathway is amino-acid biosynthesis; L-leucine biosynthesis; L-leucine from 3-methyl-2-oxobutanoate: step 2/4. Catalyzes the isomerization between 2-isopropylmalate and 3-isopropylmalate, via the formation of 2-isopropylmaleate. This is 3-isopropylmalate dehydratase large subunit from Aliivibrio salmonicida (strain LFI1238) (Vibrio salmonicida (strain LFI1238)).